Here is a 678-residue protein sequence, read N- to C-terminus: Pescadillo homolog (678 aa).

Residues 283–303 (EEEEPEEVDSEAGDEDDDDLP) are compositionally biased toward acidic residues. Residues 283–316 (EEEEPEEVDSEAGDEDDDDLPVLDSGTRRRRAAA) are disordered. The region spanning 361–451 (VCGSLFRGRV…VLMPTDLYAP (91 aa)) is the BRCT domain. A coiled-coil region spans residues 552–587 (MTRKARKMYNNMKQKEAAKQERVQQLESKKAKLAAT). Positions 563-678 (MKQKEAAKQE…DAAPAKRQRR (116 aa)) are disordered. Basic and acidic residues predominate over residues 564 to 581 (KQKEAAKQERVQQLESKK). Composition is skewed to low complexity over residues 597 to 618 (KPAA…VAAS) and 630 to 661 (APAP…AAKE). Residues 662-672 (APAKGGKDAAP) show a composition bias toward basic and acidic residues.

This sequence belongs to the pescadillo family.

Its subcellular location is the nucleus. The protein localises to the nucleolus. It is found in the nucleoplasm. In terms of biological role, required for maturation of ribosomal RNAs and formation of the large ribosomal subunit. This is Pescadillo homolog from Chlamydomonas reinhardtii (Chlamydomonas smithii).